The primary structure comprises 633 residues: Probable methyltransferase PMT15 (633 aa).

Residues 1–24 (MGNYRWPSKLSKLSLRAKQTNLYR) are Cytoplasmic-facing. The helical; Signal-anchor for type II membrane protein transmembrane segment at 25–45 (VILIAILCVTFYFVGVWQHSG) threads the bilayer. The Lumenal segment spans residues 46-633 (RGISRSSISN…APAPDQSSDP (588 aa)). N-linked (GlcNAc...) asparagine glycans are attached at residues Asn-113 and Asn-298.

Belongs to the methyltransferase superfamily.

It localises to the golgi apparatus membrane. In Arabidopsis thaliana (Mouse-ear cress), this protein is Probable methyltransferase PMT15.